Consider the following 347-residue polypeptide: MKASILRSVRSAVSRSSSSNRLLSRSFATESVPERKVAVLGAAGGIGQPLALLMKLNPLVSKLALYDIAGTPGVAADVGHVNTRSEVTGYVGEEQLGKALEGSDVVIIPAGVPRKPGMTRDDLFNINAGIVKSLCTAIAKYCPNALINMISNPVNSTVPIAAEVFKKAGTYDEKKLFGVTTLDVVRAKTFYAGKANVPVAEVNVPVIGGHAGITILPLFSQATPRANLSDDTIVALTKRTQDGGTEVVEAKAGKGSATLSMAYAGALFADACLKGLNGVPDVVECSFVQSTVTELPFFASKVKLGKNGVESVLDLGPLSDFEKEGLEKLKPELKASIEKGIQFANAN.

A mitochondrion-targeting transit peptide spans 1–27 (MKASILRSVRSAVSRSSSSNRLLSRSF). Residues 41 to 47 (GAAGGIG) and aspartate 67 contribute to the NAD(+) site. Substrate-binding residues include arginine 114 and arginine 120. NAD(+)-binding positions include asparagine 127 and 150–152 (ISN). Residues asparagine 152 and arginine 186 each coordinate substrate. The active-site Proton acceptor is histidine 210. Position 261 (methionine 261) interacts with NAD(+).

This sequence belongs to the LDH/MDH superfamily. MDH type 1 family. Homodimer.

The protein resides in the mitochondrion matrix. It catalyses the reaction (S)-malate + NAD(+) = oxaloacetate + NADH + H(+). The polypeptide is Malate dehydrogenase, mitochondrial (MMDH) (Citrullus lanatus (Watermelon)).